The sequence spans 895 residues: Ras and Rab interactor 2 (895 aa).

The region spanning 97-190 (WLQLSLSEEE…VLPFTLKLPY (94 aa)) is the SH2 domain. Positions 284-361 (LSGGLKRPST…KPTPIPPPRL (78 aa)) are disordered. Positions 306–315 (SPPPRPPPPA) are enriched in pro residues. Residues 328–338 (TETQTSMPETV) show a composition bias toward polar residues. Ser366 is modified (phosphoserine). Disordered regions lie at residues 373–442 (GAKT…SDSL) and 460–481 (SLED…KSKK). Positions 430 to 441 (SDMSISTSSSDS) are enriched in low complexity. Phosphoserine is present on Ser501. Position 509 is a phosphothreonine (Thr509). The region spanning 618–757 (DGSWKQLKEN…IKNFQEEQAA (140 aa)) is the VPS9 domain. Residues 787 to 878 (FQNYLRVAFQ…FHFVYKRIKN (92 aa)) form the Ras-associating domain.

It belongs to the RIN (Ras interaction/interference) family. In terms of assembly, homotetramer; probably composed of anti-parallel linkage of two parallel dimers. Interacts with Ras. Interacts with RAB5B, with a much higher affinity for GTP-bound activated RAB5B. Does not interact with other members of the Rab family. As to expression, widely expressed. Expressed in heart, kidney, lung placenta. Expressed at low level in skeletal muscle, spleen and peripheral blood.

The protein localises to the cytoplasm. Functionally, ras effector protein. May function as an upstream activator and/or downstream effector for RAB5B in endocytic pathway. May function as a guanine nucleotide exchange (GEF) of RAB5B, required for activating the RAB5 proteins by exchanging bound GDP for free GTP. In Homo sapiens (Human), this protein is Ras and Rab interactor 2 (RIN2).